The primary structure comprises 292 residues: 4-diphosphocytidyl-2-C-methyl-D-erythritol kinase (292 aa).

Residue lysine 10 is part of the active site. 94-104 (PVAAGLAGGSS) lines the ATP pocket. Aspartate 136 is a catalytic residue.

This sequence belongs to the GHMP kinase family. IspE subfamily.

The enzyme catalyses 4-CDP-2-C-methyl-D-erythritol + ATP = 4-CDP-2-C-methyl-D-erythritol 2-phosphate + ADP + H(+). The protein operates within isoprenoid biosynthesis; isopentenyl diphosphate biosynthesis via DXP pathway; isopentenyl diphosphate from 1-deoxy-D-xylulose 5-phosphate: step 3/6. Functionally, catalyzes the phosphorylation of the position 2 hydroxy group of 4-diphosphocytidyl-2C-methyl-D-erythritol. In Brevibacillus brevis (strain 47 / JCM 6285 / NBRC 100599), this protein is 4-diphosphocytidyl-2-C-methyl-D-erythritol kinase.